Here is a 354-residue protein sequence, read N- to C-terminus: Uroporphyrinogen decarboxylase (354 aa).

Substrate-binding positions include 27 to 31, Asp-77, Tyr-154, Thr-209, and His-327; that span reads RQAGR.

Belongs to the uroporphyrinogen decarboxylase family. In terms of assembly, homodimer.

The protein localises to the cytoplasm. It catalyses the reaction uroporphyrinogen III + 4 H(+) = coproporphyrinogen III + 4 CO2. It participates in porphyrin-containing compound metabolism; protoporphyrin-IX biosynthesis; coproporphyrinogen-III from 5-aminolevulinate: step 4/4. Its function is as follows. Catalyzes the decarboxylation of four acetate groups of uroporphyrinogen-III to yield coproporphyrinogen-III. The protein is Uroporphyrinogen decarboxylase of Escherichia coli (strain UTI89 / UPEC).